Reading from the N-terminus, the 390-residue chain is Zinc finger CCCH domain-containing protein 46 (390 aa).

The segment at 2–29 (SRRQEICRNFQRGSCKYGAQCRYLHASP) adopts a C3H1-type zinc-finger fold. The tract at residues 27–129 (ASPHQQQQQQ…AAHTSCEDPQ (103 aa)) is disordered. Positions 48–76 (GSRQQQQPSFGSQFQQQQQQQQKPNPFGF) are enriched in low complexity. Over residues 106-129 (PTKQTEAVQPPQAQAAHTSCEDPQ) the composition is skewed to polar residues. The tract at residues 146–211 (WKLTCYAHLR…FTNLLNSARP (66 aa)) is required for transcriptional activation activity. Polar residues predominate over residues 230–248 (SSFGASQTNGPPVFSSFSQ). Residues 230-284 (SSFGASQTNGPPVFSSFSQIGAATNIGPGPGTTAPGMPASSPFGHPSSAPLAAPT) form a disordered region. Residues 250–268 (GAATNIGPGPGTTAPGMPA) are compositionally biased toward low complexity.

Interacts with GSK1 and GSK4. In terms of processing, phosphorylated on serine and threonine residues by GSK1. Phosphorylation represses nuclear localization. In terms of tissue distribution, expressed in the adaxial face of the collar, nodes and the basal region of elongating internodes.

Its subcellular location is the nucleus. It is found in the cytoplasm. Its function is as follows. Transcriptional activator that binds double-stranded DNA and the single-stranded RNA polymers poly(rA), poly(rU) and poly(rG), but not poly(rC). Mediates optimal plant architecture through brassinosteroid (BR) signaling. May act as a negative regulator in sterol homeostasis. Acts as a negative regulator of BR signaling. Binds to the specific DNA sequence 5'-CTCGC-3' of BZR1 promoter and negatively regulates BZR1. Acts as an antagonistic transcription factor of BZR1 to attenuate the BR signaling pathway and regulate leaf bending. Represses the expression of ILI1, and activates that of IBH1 to balance the regulation activity of BZR1. The chain is Zinc finger CCCH domain-containing protein 46 from Oryza sativa subsp. japonica (Rice).